The primary structure comprises 294 residues: MSDYLVKALAYDGMARVYAAVTTETIKEAQRRHDTWSVSSAALGRTMTGTLFLGAMQKEDQKITVKIEGDGPIGPIVADSNAQGQIRGYVTNPHVHFSELNEAGKLDVRRGVGTSGMLSVVKDLGFGENFTGQTPIVSGEIGEDFTYYLATSEQINSSVGVGVLVNPDDTIEAAGGFMLQLLPGATDEIIDEIEKNLMALPTVSRMIEAGETPESILAKLAGGEDKLQILEKIPVSFECNCSKERFGSAIISLGKEEIRSMIEEDHGAEAECHFCRNTYDFSEEELKTLYEEAK.

2 disulfides stabilise this stretch: C239-C241 and C272-C275.

Belongs to the HSP33 family. In terms of processing, under oxidizing conditions two disulfide bonds are formed involving the reactive cysteines. Under reducing conditions zinc is bound to the reactive cysteines and the protein is inactive.

It is found in the cytoplasm. Functionally, redox regulated molecular chaperone. Protects both thermally unfolding and oxidatively damaged proteins from irreversible aggregation. Plays an important role in the bacterial defense system toward oxidative stress. This chain is 33 kDa chaperonin, found in Listeria monocytogenes serovar 1/2a (strain ATCC BAA-679 / EGD-e).